The primary structure comprises 503 residues: D-xylose-proton symporter-like 1 (503 aa).

Residues Met1–Gly23 are disordered. Over residues Gln8 to Gly23 the composition is skewed to low complexity. A run of 12 helical transmembrane segments spans residues Phe51–Met73, Ile95–Ala115, Phe129–Ile149, Val152–Thr172, Val190–Trp210, Met213–Ala233, Ala305–Leu325, Ile346–Asp366, Leu374–Phe394, Ala405–Ile425, Gly437–Ser457, and Ile467–Val487.

It belongs to the major facilitator superfamily. Sugar transporter (TC 2.A.1.1) family.

The protein localises to the membrane. In Arabidopsis thaliana (Mouse-ear cress), this protein is D-xylose-proton symporter-like 1.